We begin with the raw amino-acid sequence, 475 residues long: Trigger factor (475 aa).

A PPIase FKBP-type domain is found at glycine 165–leucine 250. Residues glutamate 439–serine 466 show a composition bias toward basic and acidic residues. The disordered stretch occupies residues glutamate 439–alanine 475.

The protein belongs to the FKBP-type PPIase family. Tig subfamily.

It is found in the cytoplasm. It catalyses the reaction [protein]-peptidylproline (omega=180) = [protein]-peptidylproline (omega=0). Functionally, involved in protein export. Acts as a chaperone by maintaining the newly synthesized protein in an open conformation. Functions as a peptidyl-prolyl cis-trans isomerase. This is Trigger factor from Bartonella tribocorum (strain CIP 105476 / IBS 506).